Reading from the N-terminus, the 130-residue chain is Small ribosomal subunit protein uS11 (130 aa).

Belongs to the universal ribosomal protein uS11 family. Part of the 30S ribosomal subunit. Interacts with proteins S7 and S18. Binds to IF-3.

Located on the platform of the 30S subunit, it bridges several disparate RNA helices of the 16S rRNA. Forms part of the Shine-Dalgarno cleft in the 70S ribosome. This is Small ribosomal subunit protein uS11 from Synechococcus sp. (strain CC9605).